Here is a 120-residue protein sequence, read N- to C-terminus: NAD(P)H-quinone oxidoreductase subunit 3 (120 aa).

3 helical membrane-spanning segments follow: residues 10-30 (FLGFLLIAAAVPVLALVTNLI), 64-84 (MFALVFVIFDVETVFLYPWAV), and 89-109 (LGLLAFIEALIFIAILVIALA).

It belongs to the complex I subunit 3 family. In terms of assembly, NDH-1 can be composed of about 15 different subunits; different subcomplexes with different compositions have been identified which probably have different functions.

The protein localises to the cellular thylakoid membrane. The catalysed reaction is a plastoquinone + NADH + (n+1) H(+)(in) = a plastoquinol + NAD(+) + n H(+)(out). It carries out the reaction a plastoquinone + NADPH + (n+1) H(+)(in) = a plastoquinol + NADP(+) + n H(+)(out). NDH-1 shuttles electrons from an unknown electron donor, via FMN and iron-sulfur (Fe-S) centers, to quinones in the respiratory and/or the photosynthetic chain. The immediate electron acceptor for the enzyme in this species is believed to be plastoquinone. Couples the redox reaction to proton translocation, and thus conserves the redox energy in a proton gradient. Cyanobacterial NDH-1 also plays a role in inorganic carbon-concentration. The protein is NAD(P)H-quinone oxidoreductase subunit 3 of Prochlorococcus marinus (strain MIT 9301).